A 204-amino-acid polypeptide reads, in one-letter code: MTKLLQIIASPRGGDSKSNALADAFVAAQRAKDSTLQVDHLDLWAEDLPAFDGDPAAAKMTFFGVGQMDPSKEQAWSAVARITERFMSADHVVMGVPMWNGGIPYRLKHYIDIITQPGMLFGFDPDNGYSGLLRNRKATVVTTSGVWSEGADARFGSDFHSTYLKWWFETIGITDVTFVRYQPSLLTDDPQAGYDRALAALTAA.

Residues S10 and S16–S18 contribute to the FMN site.

Belongs to the azoreductase type 1 family. Homodimer. Requires FMN as cofactor.

The enzyme catalyses 2 a quinone + NADH + H(+) = 2 a 1,4-benzosemiquinone + NAD(+). It catalyses the reaction N,N-dimethyl-1,4-phenylenediamine + anthranilate + 2 NAD(+) = 2-(4-dimethylaminophenyl)diazenylbenzoate + 2 NADH + 2 H(+). In terms of biological role, quinone reductase that provides resistance to thiol-specific stress caused by electrophilic quinones. Its function is as follows. Also exhibits azoreductase activity. Catalyzes the reductive cleavage of the azo bond in aromatic azo compounds to the corresponding amines. The chain is FMN-dependent NADH:quinone oxidoreductase from Ruegeria pomeroyi (strain ATCC 700808 / DSM 15171 / DSS-3) (Silicibacter pomeroyi).